We begin with the raw amino-acid sequence, 400 residues long: 3-phenylpropionate/cinnamic acid dioxygenase ferredoxin--NAD(+) reductase component (400 aa).

Residue 5 to 36 (TIIIVGGGQAAAMAAASLRQQGFTGELHLFSD) coordinates FAD. 146–174 (SVVIVGAGTIGLELAASATQRGCKVTVIE) serves as a coordination point for NAD(+).

This sequence belongs to the bacterial ring-hydroxylating dioxygenase ferredoxin reductase family. As to quaternary structure, this dioxygenase system consists of four proteins: the two subunits of the hydroxylase component (HcaE and HcaF), a ferredoxin (HcaC) and a ferredoxin reductase (HcaD). It depends on FAD as a cofactor.

The enzyme catalyses 2 reduced [2Fe-2S]-[ferredoxin] + NAD(+) + H(+) = 2 oxidized [2Fe-2S]-[ferredoxin] + NADH. The protein operates within aromatic compound metabolism; 3-phenylpropanoate degradation. Part of the multicomponent 3-phenylpropionate dioxygenase, that converts 3-phenylpropionic acid (PP) and cinnamic acid (CI) into 3-phenylpropionate-dihydrodiol (PP-dihydrodiol) and cinnamic acid-dihydrodiol (CI-dihydrodiol), respectively. This is 3-phenylpropionate/cinnamic acid dioxygenase ferredoxin--NAD(+) reductase component from Escherichia coli (strain SMS-3-5 / SECEC).